The following is a 258-amino-acid chain: L-aminoadipate-semialdehyde dehydrogenase-phosphopantetheinyl transferase (258 aa).

The protein belongs to the P-Pant transferase superfamily. AcpS family.

The enzyme catalyses apo-[ACP] + CoA = holo-[ACP] + adenosine 3',5'-bisphosphate + H(+). In terms of biological role, catalyzes the transfer of a 4'-phosphopantetheine moiety from coenzyme A to a serine residue of acceptor proteins, such as alpha-aminoadipate reductase. Necessary for alpha-aminoadipate reductase activity. The protein is L-aminoadipate-semialdehyde dehydrogenase-phosphopantetheinyl transferase (LYS5) of Candida glabrata (strain ATCC 2001 / BCRC 20586 / JCM 3761 / NBRC 0622 / NRRL Y-65 / CBS 138) (Yeast).